Here is a 653-residue protein sequence, read N- to C-terminus: Intermembrane lipid transfer protein vps13l (653 aa).

The B box-type zinc finger occupies 5 to 49 (ISELKCQQHDKLVTIYCCACDAYFCKKCDKEKHSQDDNQEDSLHI). Cys10, His13, Cys32, and His37 together coordinate Zn(2+). Disordered regions lie at residues 159–232 (NLID…NRKK), 248–420 (HILN…EDDS), and 627–653 (EKSN…PNEN). Over residues 195-213 (SPSPSRSSESNSTTNNNNN) the composition is skewed to low complexity. Acidic residues predominate over residues 266 to 277 (DYDDDDDNDDDN). Residues 278–293 (NNNNNNNNNNNNNNNN) are compositionally biased toward low complexity. Residues 314 to 330 (ETEKEIENVENKIDNKP) show a composition bias toward basic and acidic residues. Acidic residues predominate over residues 366-381 (IFEEEEEEEEDEDEVG).

The protein belongs to the VPS13 family.

Its subcellular location is the membrane. Mediates the transfer of lipids between membranes at organelle contact sites. The chain is Intermembrane lipid transfer protein vps13l (vps13l) from Dictyostelium discoideum (Social amoeba).